The chain runs to 706 residues: SPX domain-containing membrane protein Os09g0521800 (706 aa).

The region spanning 2 to 145 (VNFSNKLTKD…GYKFTDYYVR (144 aa)) is the SPX domain. 6 helical membrane-spanning segments follow: residues 251 to 271 (MSLVLNLANTFLYMVNTYIVV), 281 to 301 (LGAAATACGAVIGSMAVAQVF), 318 to 338 (LLFSSVVLLLGNVMYAMAFDL), 340 to 359 (SLTILLLGRVLCGMGSARAV), 378 to 398 (AAFVSASALGMACGPALAGLL), and 414 to 434 (LPGWIMAFGWLVYLIWLWILF). The tract at residues 475–498 (SEQDEEDDNGDEEHNETLSSSTTT) is disordered. Positions 476-488 (EQDEEDDNGDEEH) are enriched in acidic residues. 5 consecutive transmembrane segments (helical) span residues 520–540 (LLIYFMLKYAMEILLAESSVV), 554–574 (VFLAVLGLSVLPVNAIVGTYI), 583–603 (ILVASEMALLAGVMLSFKLTV), 611–631 (VCSAVLTFVSAEVVEGVNLSL), and 678–698 (LLNATLLPALLVCVASIAATL).

This sequence belongs to the major facilitator superfamily.

It is found in the membrane. The sequence is that of SPX domain-containing membrane protein Os09g0521800 from Oryza sativa subsp. japonica (Rice).